The primary structure comprises 236 residues: UPF0502 protein Bamb_4889 (236 aa).

It belongs to the UPF0502 family.

The sequence is that of UPF0502 protein Bamb_4889 from Burkholderia ambifaria (strain ATCC BAA-244 / DSM 16087 / CCUG 44356 / LMG 19182 / AMMD) (Burkholderia cepacia (strain AMMD)).